We begin with the raw amino-acid sequence, 139 residues long: uncharacterized protein (139 aa).

3 helical membrane-spanning segments follow: residues 19–39 (CIIFMVIVGLGLLFAFQFILG), 64–84 (IFNVLVEHSYYGLLLSTFNLF), and 89–109 (AITIRLCFIFAISIVIFWILG).

Its subcellular location is the cell membrane. This is an uncharacterized protein from Methanocaldococcus jannaschii (strain ATCC 43067 / DSM 2661 / JAL-1 / JCM 10045 / NBRC 100440) (Methanococcus jannaschii).